A 424-amino-acid polypeptide reads, in one-letter code: Serine--tRNA ligase (424 aa).

Position 230 to 232 (230 to 232) interacts with L-serine; the sequence is TAE. Residue 261–263 participates in ATP binding; the sequence is RSE. Residue E284 participates in L-serine binding. 348–351 is an ATP binding site; sequence EISS. S384 contributes to the L-serine binding site.

This sequence belongs to the class-II aminoacyl-tRNA synthetase family. Type-1 seryl-tRNA synthetase subfamily. In terms of assembly, homodimer. The tRNA molecule binds across the dimer.

It is found in the cytoplasm. It catalyses the reaction tRNA(Ser) + L-serine + ATP = L-seryl-tRNA(Ser) + AMP + diphosphate + H(+). The enzyme catalyses tRNA(Sec) + L-serine + ATP = L-seryl-tRNA(Sec) + AMP + diphosphate + H(+). It participates in aminoacyl-tRNA biosynthesis; selenocysteinyl-tRNA(Sec) biosynthesis; L-seryl-tRNA(Sec) from L-serine and tRNA(Sec): step 1/1. Functionally, catalyzes the attachment of serine to tRNA(Ser). Is also able to aminoacylate tRNA(Sec) with serine, to form the misacylated tRNA L-seryl-tRNA(Sec), which will be further converted into selenocysteinyl-tRNA(Sec). In Streptococcus pneumoniae serotype 19F (strain G54), this protein is Serine--tRNA ligase.